Consider the following 681-residue polypeptide: Elongation factor G (681 aa).

A tr-type G domain is found at 5 to 279 (KNIRNIGIIA…SIVNFLPSPI (275 aa)). GTP contacts are provided by residues 14–21 (AHVDAGKT), 82–86 (DTPGH), and 136–139 (NKLD).

Belongs to the TRAFAC class translation factor GTPase superfamily. Classic translation factor GTPase family. EF-G/EF-2 subfamily.

It is found in the cytoplasm. Functionally, catalyzes the GTP-dependent ribosomal translocation step during translation elongation. During this step, the ribosome changes from the pre-translocational (PRE) to the post-translocational (POST) state as the newly formed A-site-bound peptidyl-tRNA and P-site-bound deacylated tRNA move to the P and E sites, respectively. Catalyzes the coordinated movement of the two tRNA molecules, the mRNA and conformational changes in the ribosome. The sequence is that of Elongation factor G from Carsonella ruddii (strain PV).